The following is a 207-amino-acid chain: Ras-related protein Rab-7a (207 aa).

An N-acetylthreonine modification is found at Thr-2. Residues Ser-17, Gly-18, Val-19, Gly-20, Lys-21, Thr-22, Ser-23, Ser-34, Asn-35, Tyr-37, and Thr-40 each coordinate GTP. Thr-22 serves as a coordination point for Mg(2+). The Switch 1 signature appears at Tyr-28 to Ile-41. Mg(2+) contacts are provided by Thr-40 and Asp-63. Residue Gly-66 participates in GTP binding. The Switch 2 signature appears at Gln-67–Asp-82. Ser-72 carries the phosphoserine modification. Asn-125, Lys-126, Asp-128, Ala-156, and Lys-157 together coordinate GTP. Residues Lys-191 and Lys-194 each participate in a glycyl lysine isopeptide (Lys-Gly) (interchain with G-Cter in ubiquitin) cross-link. 2 S-geranylgeranyl cysteine lipidation sites follow: Cys-205 and Cys-207. Cys-207 bears the Cysteine methyl ester mark.

It belongs to the small GTPase superfamily. Rab family. As to quaternary structure, interacts with NTRK1/TRKA, RILP, PSMA7, RNF115 and FYCO1. Interacts with the PIK3C3/VPS34-PIK3R4 complex. The GTP-bound form interacts with OSBPL1A and RAC1. Interacts with CLN3. Interacts with CHM, the substrate-binding subunit of the Rab geranylgeranyltransferase complex. Interacts with C9orf72. Does not interact with HPS4 and the BLOC-3 complex (heterodimer of HPS1 and HPS4). Interacts with CLN5. Interacts with PLEKHM1 (via N- and C-terminus). Interacts with PRPH; the interaction is direct. Interacts with VPS13A. The GDP-bound form interacts with RIMOC1. Interacts with the MON1A-CCZ1B complex and this interaction is enhanced in the presence of RIMOC1. Interacts with VPS39 and VPS41. Forms a ternary complex with LAMP2 and RUFY4; the interaction with LAMP2 is mediated by RUFY4 (via RUN and coiled coil domains). Requires Mg(2+) as cofactor. Deubiquitination at Lys-191 and Lys-194 by USP32. Post-translationally, phosphorylated at Ser-72 by LRRK1; phosphorylation is dependent on protein kinase C (PKC) activation of LRRK1. In terms of processing, prenylated. Prenylation is required for association with cellular membranes. Widely expressed. High expression in liver, heart and kidney. Found in sensory and motor neurons.

The protein localises to the cytoplasmic vesicle. It is found in the phagosome membrane. The protein resides in the late endosome membrane. It localises to the lysosome membrane. Its subcellular location is the melanosome membrane. The protein localises to the autophagosome membrane. It is found in the lipid droplet. The protein resides in the endosome membrane. It localises to the mitochondrion membrane. The catalysed reaction is GTP + H2O = GDP + phosphate + H(+). Regulated by guanine nucleotide exchange factors (GEFs) which promote the exchange of bound GDP for free GTP. Regulated by GTPase activating proteins (GAPs) which increase the GTP hydrolysis activity. Inhibited by GDP dissociation inhibitors (GDIs). The small GTPases Rab are key regulators of intracellular membrane trafficking, from the formation of transport vesicles to their fusion with membranes. Rabs cycle between an inactive GDP-bound form and an active GTP-bound form that is able to recruit to membranes different sets of downstream effectors directly responsible for vesicle formation, movement, tethering and fusion. In its active state, RAB7A binds to a variety of effector proteins playing a key role in the regulation of endo-lysosomal trafficking. Governs early-to-late endosomal maturation, microtubule minus-end as well as plus-end directed endosomal migration and positioning, and endosome-lysosome transport through different protein-protein interaction cascades. Also plays a central role in growth-factor-mediated cell signaling, nutrient-transporter-mediated nutrient uptake, neurotrophin transport in the axons of neurons and lipid metabolism. Also involved in regulation of some specialized endosomal membrane trafficking, such as maturation of melanosomes, pathogen-induced phagosomes (or vacuoles) and autophagosomes. Plays a role in the maturation and acidification of phagosomes that engulf pathogens, such as S.aureus and Mycobacteria. Plays a role in the fusion of phagosomes with lysosomes. In concert with RAC1, plays a role in regulating the formation of RBs (ruffled borders) in osteoclasts. Controls the endosomal trafficking and neurite outgrowth signaling of NTRK1/TRKA. Regulates the endocytic trafficking of the EGF-EGFR complex by regulating its lysosomal degradation. Involved in the ADRB2-stimulated lipolysis through lipophagy, a cytosolic lipase-independent autophagic pathway. Required for the exosomal release of SDCBP, CD63 and syndecan. Required for vesicular trafficking and cell surface expression of ACE2. May play a role in PRPH neuronal intermediate filament assembly. This is Ras-related protein Rab-7a from Mus musculus (Mouse).